The primary structure comprises 902 residues: Gamma-tubulin complex component 2 (902 aa).

Residue tyrosine 83 is modified to Phosphotyrosine. The interval 874–902 (AERSQKATPQVPVLRGPPAPAPRVAVTAQ) is disordered.

Belongs to the TUBGCP family. Component of the gamma-tubulin ring complex (gTuRC) consisting of TUBGCP2, TUBGCP3, TUBGCP4, TUBGCP5 and TUBGCP6 and gamma-tubulin TUBG1 or TUBG2. TUBGCP2, TUBGCP3, TUBGCP4, TUBGCP5 and TUBGCP6 assemble in a 5:5:2:1:1 stoichiometry; each is associated with a gamma-tubulin, thereby arranging 14 gamma-tubulins in a helical manner. Gamma-tubulin at the first position is blocked by TUBGCP3 at the last position, allowing 13 protafilaments to grow into a microtubule. The gTuRC (via TUBGCP3 and TUBGCP6) interacts with ACTB and MZT1; the interactions form a luminal bridge that stabilizes the initial structure during complex assembly. The gTuRC (via TUBGCP2) interacts with MZT2A/MZT2B and CDK5RAP2 (via CM1 motif); the interactions play a role in gTuRC activation. Interacts with ATF5; the ATF5:PCNT:polyglutamylated tubulin (PGT) tripartite unites the mother centriole and the pericentriolar material (PCM) in the centrosome. As to expression, ubiquitously expressed.

It is found in the cytoplasm. Its subcellular location is the cytoskeleton. It localises to the microtubule organizing center. The protein resides in the centrosome. Its function is as follows. Component of the gamma-tubulin ring complex (gTuRC) which mediates microtubule nucleation. The gTuRC regulates the minus-end nucleation of alpha-beta tubulin heterodimers that grow into microtubule protafilaments, a critical step in centrosome duplication and spindle formation. Plays a role in neuronal migration. In Homo sapiens (Human), this protein is Gamma-tubulin complex component 2 (TUBGCP2).